A 378-amino-acid polypeptide reads, in one-letter code: Protein RecA (378 aa).

An ATP-binding site is contributed by 79–86; it reads GPESSGKT.

It belongs to the RecA family.

The protein resides in the cytoplasm. Functionally, can catalyze the hydrolysis of ATP in the presence of single-stranded DNA, the ATP-dependent uptake of single-stranded DNA by duplex DNA, and the ATP-dependent hybridization of homologous single-stranded DNAs. It interacts with LexA causing its activation and leading to its autocatalytic cleavage. The sequence is that of Protein RecA from Streptococcus pyogenes serotype M2 (strain MGAS10270).